The primary structure comprises 184 residues: Inosine triphosphate pyrophosphatase (184 aa).

Position 10 to 15 (10 to 15 (TGNANK)) interacts with ITP. Glutamate 38 is a binding site for Mg(2+). Residues lysine 50, 66-67 (DT), lysine 83, 142-145 (FGWD), lysine 163, and 168-169 (HR) each bind ITP.

Belongs to the HAM1 NTPase family. Homodimer. Mg(2+) serves as cofactor. Mn(2+) is required as a cofactor.

The protein resides in the cytoplasm. It localises to the nucleus. The catalysed reaction is ITP + H2O = IMP + diphosphate + H(+). The enzyme catalyses dITP + H2O = dIMP + diphosphate + H(+). It carries out the reaction XTP + H2O = XMP + diphosphate + H(+). Its function is as follows. Pyrophosphatase that hydrolyzes non-canonical purine nucleotides such as inosine triphosphate (ITP), deoxyinosine triphosphate (dITP) or xanthosine 5'-triphosphate (XTP) to their respective monophosphate derivatives. The enzyme does not distinguish between the deoxy- and ribose forms. Probably excludes non-canonical purines from RNA and DNA precursor pools, thus preventing their incorporation into RNA and DNA and avoiding chromosomal lesions. The protein is Inosine triphosphate pyrophosphatase of Fusarium vanettenii (strain ATCC MYA-4622 / CBS 123669 / FGSC 9596 / NRRL 45880 / 77-13-4) (Fusarium solani subsp. pisi).